The primary structure comprises 80 residues: Toxin TdNa1 (80 aa).

The N-terminal stretch at 1-20 (MKGIILFISCLMLIDVVVES) is a signal peptide. The LCN-type CS-alpha/beta domain maps to 21 to 79 (RDAYPADWRGCKFSCFWGSSSWCNEECTSLGGSSGYCAWPACWCYGLPDSVRYYNNKCH). Cystine bridges form between cysteine 31/cysteine 78, cysteine 35/cysteine 57, cysteine 43/cysteine 62, and cysteine 47/cysteine 64.

Belongs to the long (4 C-C) scorpion toxin superfamily. Sodium channel inhibitor family. Beta subfamily. As to expression, expressed by the venom gland.

Its subcellular location is the secreted. Functionally, inhibits the sodium (Nav) currents in an apparent irreversible manner. Produces small depolarization and induces repetitive firing in squid axons. Is specific for arthropods (crickets, triatomides, crabs and squids), but is non-toxic to mice. This chain is Toxin TdNa1, found in Tityus discrepans (Venezuelan scorpion).